Reading from the N-terminus, the 450-residue chain is Grayanic acid biosynthesis cluster O-methyltransferase (450 aa).

Aspartate 254 is an S-adenosyl-L-methionine binding site. The Proton acceptor role is filled by histidine 301.

This sequence belongs to the class I-like SAM-binding methyltransferase superfamily. Cation-independent O-methyltransferase family. COMT subfamily.

Its pathway is secondary metabolite biosynthesis. Its function is as follows. Non-reducing polyketide synthase; part of the gene cluster that mediates the biosynthesis of orcinol depsidone grayanic acid (GRA), the only major secondary metabolite known in C.grayi. The first step consists in the ring and depside synthesis by PKS16 leading to 4-O-demethylsphaerophorin, involving different orcinol-like rings, one with acetyl CoA and the other with octanoyl CoA as the starter. Further depsidone formation by the GRA cluster-specific cytochrome P450 leads to 4-O-demethylgrayanic acid. Finally, the cluster specific O-methyltransferase probably converts the 4-O-demethylgrayanic acid into grayanic acid. The chain is Grayanic acid biosynthesis cluster O-methyltransferase from Cladonia grayi (Gray's cup lichen).